A 422-amino-acid polypeptide reads, in one-letter code: MRVIRDAVLADGRVRDIRLDGERIDAVGTALDGELFVDANADYRVLPGMIDAHVHFRQPGFEHKETWASGSRSAAAGGVTTVVDQPNTAPPTVTGDAVDEKAAHAAADSVVDWGVNGGVTGEWDPASLFDRSLFALGEVFLADSTGDMGIDAALFRDACQRAASEDVVVTVHAEDADRFDTAAKSRSDADAWSAYRTPEAEAAAVERAVEVGTEAGATIHIAHTSTPEGVDAAAAGGATCEATPHHLFLSRDDLDDLGTFGRMNPPLRSDPRREALFERLADGRIDVVATDHAPHTRAEKAADIWDAPSGVPGVETALPLLLGAAHRGELSYERVRDVTAANPADVFGLERKGHIAAGRDADLVLVDPDDAREIHGDDLHSNCEWTPFEGHVGVFPAMTLVRGTTVWDGDTVSAFDGRNVRQ.

Zn(2+) is bound by residues His-53 and His-55. Residues 55-57 (HFR) and Asn-87 contribute to the substrate site. 4 residues coordinate Zn(2+): Glu-138, His-172, His-223, and Asp-291. Asp-291 is a catalytic residue. Substrate is bound at residue His-295.

The protein belongs to the metallo-dependent hydrolases superfamily. DHOase family. Class I DHOase subfamily. Zn(2+) serves as cofactor.

The catalysed reaction is (S)-dihydroorotate + H2O = N-carbamoyl-L-aspartate + H(+). It participates in pyrimidine metabolism; UMP biosynthesis via de novo pathway; (S)-dihydroorotate from bicarbonate: step 3/3. Functionally, catalyzes the reversible cyclization of carbamoyl aspartate to dihydroorotate. This chain is Dihydroorotase, found in Halobacterium salinarum (strain ATCC 700922 / JCM 11081 / NRC-1) (Halobacterium halobium).